The primary structure comprises 320 residues: MSKPGRTILASKVAETFNTEIINNVEEYKKTHNGQGPLLVGFLANNDPAAKMYATWTQKTSESMGFRYDLRVIEDKDFLEEAIIQANGDDSVNGIMVYFPVFGNAQDQYLQQVVCKEKDVEGLNHVYYQNLYHNVRYLDKENRLKSILPCTPLAIVKILEFLKIYNNLLPEGNRLYGKKCIVINRSEIVGRPLAALLANDGATVYSVDVNNIQKFTRGESLKLNKHHVEDLGEYSEDLLKKCSLDSDVVITGVPSENYKFPTEYIKEGAVCINFACTKNFSDDVKEKASLYVPMTGKVTIAMLLRNMLRLVRNVELSKEK.

Residue Cys150 is part of the active site. Residues 185–186, 208–209, and 274–276 each bind NAD(+); these read RS, DV, and FAC.

The protein belongs to the tetrahydrofolate dehydrogenase/cyclohydrolase family. As to quaternary structure, homodimer. The N-terminus is blocked.

It is found in the cytoplasm. It localises to the nucleus. It carries out the reaction (6R)-5,10-methylene-5,6,7,8-tetrahydrofolate + NAD(+) = (6R)-5,10-methenyltetrahydrofolate + NADH. In terms of biological role, catalyzes oxidation of cytoplasmic one-carbon units for purine biosynthesis. This chain is Methylenetetrahydrofolate dehydrogenase [NAD(+)] (MTD1), found in Saccharomyces cerevisiae (strain ATCC 204508 / S288c) (Baker's yeast).